The primary structure comprises 300 residues: N-acetylmannosamine kinase (300 aa).

Residues 5 to 12 and 132 to 139 contribute to the ATP site; these read ALDIGGTK and GVGGGIVL. Residues histidine 156, cysteine 166, cysteine 168, and cysteine 173 each coordinate Zn(2+).

The protein belongs to the ROK (NagC/XylR) family. NanK subfamily. As to quaternary structure, homodimer.

It carries out the reaction an N-acyl-D-mannosamine + ATP = an N-acyl-D-mannosamine 6-phosphate + ADP + H(+). Its pathway is amino-sugar metabolism; N-acetylneuraminate degradation; D-fructose 6-phosphate from N-acetylneuraminate: step 2/5. Functionally, catalyzes the phosphorylation of N-acetylmannosamine (ManNAc) to ManNAc-6-P. This Haemophilus influenzae (strain PittGG) protein is N-acetylmannosamine kinase.